The sequence spans 506 residues: Glutamate--tRNA ligase (506 aa).

Positions 21 to 31 match the 'HIGH' region motif; that stretch reads PSPTGIPHVGM. Positions 265 to 269 match the 'KMSKS' region motif; it reads KLSKR. K268 is a binding site for ATP.

It belongs to the class-I aminoacyl-tRNA synthetase family. Glutamate--tRNA ligase type 1 subfamily. In terms of assembly, monomer.

The protein resides in the cytoplasm. It carries out the reaction tRNA(Glu) + L-glutamate + ATP = L-glutamyl-tRNA(Glu) + AMP + diphosphate. In terms of biological role, catalyzes the attachment of glutamate to tRNA(Glu) in a two-step reaction: glutamate is first activated by ATP to form Glu-AMP and then transferred to the acceptor end of tRNA(Glu). The polypeptide is Glutamate--tRNA ligase (Bifidobacterium adolescentis (strain ATCC 15703 / DSM 20083 / NCTC 11814 / E194a)).